We begin with the raw amino-acid sequence, 123 residues long: Galanin peptides (123 aa).

The first 19 residues, 1–19 (MARGSALLLASLLLAAALS), serve as a signal peptide directing secretion. Positions 20-30 (ASAGLWSPAKE) are excised as a propeptide. Positions 46–80 (HAVGNHRSFSDKNGLTSKRELRPEDDMKPGSFDRS) are disordered. Over residues 62-73 (SKRELRPEDDMK) the composition is skewed to basic and acidic residues. A phosphoserine mark is found at serine 116 and serine 117.

Belongs to the galanin family.

It is found in the secreted. Functionally, endocrine hormone of the central and peripheral nervous systems that binds and activates the G protein-coupled receptors GALR1, GALR2, and GALR3. This small neuropeptide may regulate diverse physiologic functions including contraction of smooth muscle of the gastrointestinal and genitourinary tract, growth hormone and insulin release and adrenal secretion. The polypeptide is Galanin peptides (GAL) (Homo sapiens (Human)).